The following is a 334-amino-acid chain: N-acetyl-gamma-glutamyl-phosphate reductase (334 aa).

Cys154 is a catalytic residue.

Belongs to the NAGSA dehydrogenase family. Type 1 subfamily.

It localises to the cytoplasm. It carries out the reaction N-acetyl-L-glutamate 5-semialdehyde + phosphate + NADP(+) = N-acetyl-L-glutamyl 5-phosphate + NADPH + H(+). It participates in amino-acid biosynthesis; L-arginine biosynthesis; N(2)-acetyl-L-ornithine from L-glutamate: step 3/4. Its function is as follows. Catalyzes the NADPH-dependent reduction of N-acetyl-5-glutamyl phosphate to yield N-acetyl-L-glutamate 5-semialdehyde. The sequence is that of N-acetyl-gamma-glutamyl-phosphate reductase from Vibrio parahaemolyticus serotype O3:K6 (strain RIMD 2210633).